The sequence spans 319 residues: G-protein coupled receptor 55 (319 aa).

The Extracellular portion of the chain corresponds to 1–21 (MSQQNTSGDCLFDGVNELMKT). Residue asparagine 5 is glycosylated (N-linked (GlcNAc...) asparagine). The helical transmembrane segment at 22-42 (LQFAVHIPTFVLGLLLNLLAI) threads the bilayer. Topologically, residues 43–58 (HGFSTFLKNRWPDYAA) are cytoplasmic. A helical membrane pass occupies residues 59-79 (TSIYMINLAVFDLLLVLSLPF). The Extracellular segment spans residues 80 to 94 (KMVLSQVQSPFPSLC). The chain crosses the membrane as a helical span at residues 95–115 (TLVECLYFVSMYGSVFTICFI). Residues 116–137 (SMDRFLAIRYPLLVSHLRSPRK) are Cytoplasmic-facing. Residues 138-158 (IFGICCTIWVLVWTGSIPIYS) form a helical membrane-spanning segment. Over 159 to 180 (FHGKVEKYMCFHNMSDDTWSAK) the chain is Extracellular. N-linked (GlcNAc...) asparagine glycosylation occurs at asparagine 171. Residues 181–201 (VFFPLEVFGFLLPMGIMGFCC) traverse the membrane as a helical segment. The Cytoplasmic portion of the chain corresponds to 202–231 (SRSIHILLGRRDHTQDWVQQKACIYSIAAS). A helical membrane pass occupies residues 232-252 (LAVFVVSFLPVHLGFFLQFLV). At 253 to 271 (RNSFIVECRAKQSISFFLQ) the chain is on the extracellular side. Residues 272 to 292 (LSMCFSNVNCCLDVFCYYFVI) traverse the membrane as a helical segment. Residues 293–319 (KEFRMNIRAHRPSRVQLVLQDTTISRG) are Cytoplasmic-facing.

Belongs to the G-protein coupled receptor 1 family. As to expression, expressed in the caudate nucleus and putamen, but not detected in the hippocampus, thalamus, pons cerebellum, frontal cortex of the brain or in the liver. Expressed in osteoclasts and osteoblasts. Higly expressed in macrophages and B-cells.

Its subcellular location is the cell membrane. Its function is as follows. G-protein coupled receptor that binds to several ligands including 2-arachidonoyl lysophosphatidylinositol or lysophosphatidylglucoside with high affinity, leading to rapid and transient activation of numerous intracellular signaling pathways. Induces the Ca(2+) release from intracellular stores via ERK, the heterotrimeric G protein GNA13 and RHOA leading to morphological changes including cell rounding and stress fiber formation. In macrophages, acts downstream of lysophosphatidylglucoside to inhibit the translocation of the phospholipid-transporting ABCA1 to plasma membrane and subsequent cholesterol efflux leading to lipid accumulation and foam cell formation. This is G-protein coupled receptor 55 (GPR55) from Homo sapiens (Human).